Consider the following 110-residue polypeptide: DNA-directed RNA polymerase subunit omega (110 aa).

Belongs to the RNA polymerase subunit omega family. As to quaternary structure, the RNAP catalytic core consists of 2 alpha, 1 beta, 1 beta' and 1 omega subunit. When a sigma factor is associated with the core the holoenzyme is formed, which can initiate transcription.

It carries out the reaction RNA(n) + a ribonucleoside 5'-triphosphate = RNA(n+1) + diphosphate. Its function is as follows. Promotes RNA polymerase assembly. Latches the N- and C-terminal regions of the beta' subunit thereby facilitating its interaction with the beta and alpha subunits. The polypeptide is DNA-directed RNA polymerase subunit omega (Mycobacterium leprae (strain Br4923)).